The sequence spans 1454 residues: Coiled-coil domain-containing protein 18 (1454 aa).

S45 bears the Phosphoserine mark. Coiled coils occupy residues 107 to 138 (APVD…HSLM), 170 to 402 (ILEE…ISQL), 438 to 464 (KLVI…NLTA), and 508 to 1309 (TMNK…SGHE). Positions 828-851 (QKQRESSAEKLRKMEEKCESAAHE) are disordered. S1355 is subject to Phosphoserine.

Its subcellular location is the cytoplasm. The protein resides in the cytoskeleton. It localises to the microtubule organizing center. It is found in the centrosome. The protein localises to the centriolar satellite. This Homo sapiens (Human) protein is Coiled-coil domain-containing protein 18 (CCDC18).